The primary structure comprises 503 residues: Maturase K (503 aa).

This sequence belongs to the intron maturase 2 family. MatK subfamily.

The protein localises to the plastid. It is found in the chloroplast. Its function is as follows. Usually encoded in the trnK tRNA gene intron. Probably assists in splicing its own and other chloroplast group II introns. This Rosa californica (California wild rose) protein is Maturase K.